The following is a 153-amino-acid chain: Xanthine-guanine phosphoribosyltransferase (153 aa).

5-phospho-alpha-D-ribose 1-diphosphate contacts are provided by residues 37–38 (RG), Arg-69, and 88–96 (DDLVDTGGT). Arg-69 serves as a coordination point for GMP. Asp-89 lines the Mg(2+) pocket. Guanine contacts are provided by Asp-92 and Ile-135. Positions 92 and 135 each coordinate xanthine. Residues 92-96 (DTGGT) and 134-135 (WI) contribute to the GMP site.

The protein belongs to the purine/pyrimidine phosphoribosyltransferase family. XGPT subfamily. Homotetramer. The cofactor is Mg(2+).

Its subcellular location is the cell inner membrane. The enzyme catalyses GMP + diphosphate = guanine + 5-phospho-alpha-D-ribose 1-diphosphate. The catalysed reaction is XMP + diphosphate = xanthine + 5-phospho-alpha-D-ribose 1-diphosphate. It catalyses the reaction IMP + diphosphate = hypoxanthine + 5-phospho-alpha-D-ribose 1-diphosphate. The protein operates within purine metabolism; GMP biosynthesis via salvage pathway; GMP from guanine: step 1/1. It participates in purine metabolism; XMP biosynthesis via salvage pathway; XMP from xanthine: step 1/1. Its function is as follows. Purine salvage pathway enzyme that catalyzes the transfer of the ribosyl-5-phosphate group from 5-phospho-alpha-D-ribose 1-diphosphate (PRPP) to the N9 position of the 6-oxopurines guanine and xanthine to form the corresponding ribonucleotides GMP (guanosine 5'-monophosphate) and XMP (xanthosine 5'-monophosphate), with the release of PPi. To a lesser extent, also acts on hypoxanthine. This chain is Xanthine-guanine phosphoribosyltransferase, found in Proteus mirabilis (strain HI4320).